A 476-amino-acid chain; its full sequence is 3-isopropylmalate dehydratase large subunit (476 aa).

Residues Cys-355, Cys-416, and Cys-419 each coordinate [4Fe-4S] cluster.

This sequence belongs to the aconitase/IPM isomerase family. LeuC type 1 subfamily. Heterodimer of LeuC and LeuD. [4Fe-4S] cluster serves as cofactor.

The catalysed reaction is (2R,3S)-3-isopropylmalate = (2S)-2-isopropylmalate. The protein operates within amino-acid biosynthesis; L-leucine biosynthesis; L-leucine from 3-methyl-2-oxobutanoate: step 2/4. Its function is as follows. Catalyzes the isomerization between 2-isopropylmalate and 3-isopropylmalate, via the formation of 2-isopropylmaleate. This Sphingopyxis alaskensis (strain DSM 13593 / LMG 18877 / RB2256) (Sphingomonas alaskensis) protein is 3-isopropylmalate dehydratase large subunit.